The primary structure comprises 147 residues: D-aminoacyl-tRNA deacylase (147 aa).

The Gly-cisPro motif, important for rejection of L-amino acids signature appears at 137–138 (GP).

It belongs to the DTD family. In terms of assembly, homodimer.

The protein resides in the cytoplasm. The enzyme catalyses glycyl-tRNA(Ala) + H2O = tRNA(Ala) + glycine + H(+). It catalyses the reaction a D-aminoacyl-tRNA + H2O = a tRNA + a D-alpha-amino acid + H(+). In terms of biological role, an aminoacyl-tRNA editing enzyme that deacylates mischarged D-aminoacyl-tRNAs. Also deacylates mischarged glycyl-tRNA(Ala), protecting cells against glycine mischarging by AlaRS. Acts via tRNA-based rather than protein-based catalysis; rejects L-amino acids rather than detecting D-amino acids in the active site. By recycling D-aminoacyl-tRNA to D-amino acids and free tRNA molecules, this enzyme counteracts the toxicity associated with the formation of D-aminoacyl-tRNA entities in vivo and helps enforce protein L-homochirality. The protein is D-aminoacyl-tRNA deacylase of Acinetobacter baumannii (strain AYE).